The primary structure comprises 307 residues: MKLQIKPPNTFDEFVGKQEIISQIQLSIKASKLNKTQLDHILLYGPPGVGKTTLARLIANELKTKLQIIQGGHLQKPSDFLNAISLIKKGDVLFIDEIHAVAPNVMELMYPVMDVFKIQVLIGKDFNSKIVEMKVNPFTLIGATTQLGKIINPLEDRFGVILNINYYSNAEIEKMVSIYGKQMKLELNSNEISAITEHSKQTPRIAIRIVRRIFEQKIVNKKIDLEGLFKNLMIYKNGLQSIDVQYLEVLNRQNEPQGIKSISSMLGIDRHTIENKIEPFLLRENMIQKTKKGRIITNSGREYLVNF.

The segment at 1 to 167 is large ATPase domain (RuvB-L); the sequence is MKLQIKPPNT…FGVILNINYY (167 aa). Residues I5, G48, K51, T52, T53, R157, Y167, and R204 each coordinate ATP. T52 is a Mg(2+) binding site. Residues 168 to 233 form a small ATPAse domain (RuvB-S) region; it reads SNAEIEKMVS…DLEGLFKNLM (66 aa). A head domain (RuvB-H) region spans residues 236-307; the sequence is KNGLQSIDVQ…NSGREYLVNF (72 aa). Residues R270, K289, and R294 each contribute to the DNA site.

This sequence belongs to the RuvB family. As to quaternary structure, homohexamer. Forms an RuvA(8)-RuvB(12)-Holliday junction (HJ) complex. HJ DNA is sandwiched between 2 RuvA tetramers; dsDNA enters through RuvA and exits via RuvB. An RuvB hexamer assembles on each DNA strand where it exits the tetramer. Each RuvB hexamer is contacted by two RuvA subunits (via domain III) on 2 adjacent RuvB subunits; this complex drives branch migration. In the full resolvosome a probable DNA-RuvA(4)-RuvB(12)-RuvC(2) complex forms which resolves the HJ.

It is found in the cytoplasm. It catalyses the reaction ATP + H2O = ADP + phosphate + H(+). Its function is as follows. The RuvA-RuvB-RuvC complex processes Holliday junction (HJ) DNA during genetic recombination and DNA repair, while the RuvA-RuvB complex plays an important role in the rescue of blocked DNA replication forks via replication fork reversal (RFR). RuvA specifically binds to HJ cruciform DNA, conferring on it an open structure. The RuvB hexamer acts as an ATP-dependent pump, pulling dsDNA into and through the RuvAB complex. RuvB forms 2 homohexamers on either side of HJ DNA bound by 1 or 2 RuvA tetramers; 4 subunits per hexamer contact DNA at a time. Coordinated motions by a converter formed by DNA-disengaged RuvB subunits stimulates ATP hydrolysis and nucleotide exchange. Immobilization of the converter enables RuvB to convert the ATP-contained energy into a lever motion, pulling 2 nucleotides of DNA out of the RuvA tetramer per ATP hydrolyzed, thus driving DNA branch migration. The RuvB motors rotate together with the DNA substrate, which together with the progressing nucleotide cycle form the mechanistic basis for DNA recombination by continuous HJ branch migration. Branch migration allows RuvC to scan DNA until it finds its consensus sequence, where it cleaves and resolves cruciform DNA. The polypeptide is Holliday junction branch migration complex subunit RuvB (Mycoplasma genitalium (strain ATCC 33530 / DSM 19775 / NCTC 10195 / G37) (Mycoplasmoides genitalium)).